Consider the following 362-residue polypeptide: Probable endopolygalacturonase II (362 aa).

A signal peptide spans 1 to 20 (MHSFASLLAYGLAAGATLAS). Residues 21-27 (ASPIEAR) constitute a propeptide that is removed on maturation. A disulfide bond links Cys30 and Cys45. The PbH1 1 repeat unit spans residues 156-186 (SDDITLTDITINNADGDSLGGHNTDAFDVGN). Residue Asp201 is the Proton donor of the active site. Cys203 and Cys219 form a disulfide bridge. PbH1 repeat units lie at residues 209–229 (GENI…SIGS), 238–259 (VKNV…RIKT), 267–289 (VSEI…VIQQ), and 301–322 (TNGV…DSKA). His223 is an active-site residue. Asn240 carries an N-linked (GlcNAc...) asparagine glycan. Disulfide bonds link Cys329–Cys334 and Cys353–Cys362.

The protein belongs to the glycosyl hydrolase 28 family.

It is found in the secreted. It catalyses the reaction (1,4-alpha-D-galacturonosyl)n+m + H2O = (1,4-alpha-D-galacturonosyl)n + (1,4-alpha-D-galacturonosyl)m.. Functionally, involved in maceration and soft-rotting of plant tissue. Hydrolyzes the 1,4-alpha glycosidic bonds of de-esterified pectate in the smooth region of the plant cell wall. This is Probable endopolygalacturonase II (pgaII) from Aspergillus kawachii (strain NBRC 4308) (White koji mold).